The chain runs to 468 residues: Proline--tRNA ligase (468 aa).

The protein belongs to the class-II aminoacyl-tRNA synthetase family. ProS type 3 subfamily. Homodimer.

It localises to the cytoplasm. The catalysed reaction is tRNA(Pro) + L-proline + ATP = L-prolyl-tRNA(Pro) + AMP + diphosphate. Its function is as follows. Catalyzes the attachment of proline to tRNA(Pro) in a two-step reaction: proline is first activated by ATP to form Pro-AMP and then transferred to the acceptor end of tRNA(Pro). The chain is Proline--tRNA ligase from Frankia casuarinae (strain DSM 45818 / CECT 9043 / HFP020203 / CcI3).